Consider the following 173-residue polypeptide: ATP-dependent protease subunit HslV (173 aa).

Thr-2 is an active-site residue. 3 residues coordinate Na(+): Gly-158, Asp-161, and Ser-164.

This sequence belongs to the peptidase T1B family. HslV subfamily. As to quaternary structure, a double ring-shaped homohexamer of HslV is capped on each side by a ring-shaped HslU homohexamer. The assembly of the HslU/HslV complex is dependent on binding of ATP.

The protein localises to the cytoplasm. The catalysed reaction is ATP-dependent cleavage of peptide bonds with broad specificity.. Its activity is regulated as follows. Allosterically activated by HslU binding. Protease subunit of a proteasome-like degradation complex believed to be a general protein degrading machinery. The polypeptide is ATP-dependent protease subunit HslV (Actinobacillus pleuropneumoniae serotype 5b (strain L20)).